The chain runs to 276 residues: MAERGVERGGDRGDFGRGFGGRGGGRGGPRGRGRRAGRAPEEEKWVPVTKLGRLVKEGKITKIEQIYLHSLPVKEYQIIDLLVGPSLKDEVMKIMPVQKQTRAGQRTRFKAFIVVGDSNGHVGLGVKCSKEVATAIRGAIILAKLSVVPIRRGYWGNKIGKPHTVPCKVTGKCGSVTVRMVPAPRGSGIVAARVPKKVLQFAGIDDVFTSSRGSTKTLGNFVKATFDCLQKTYGFLTPEFWKETRFSKSPYQEHTDFLLIPPGVKISEVVVDKSVE.

Residues 1 to 15 (MAERGVERGGDRGDF) are compositionally biased toward basic and acidic residues. The tract at residues 1–42 (MAERGVERGGDRGDFGRGFGGRGGGRGGPRGRGRRAGRAPEE) is disordered. Gly residues predominate over residues 16–28 (GRGFGGRGGGRGG). Residues 87-150 (LKDEVMKIMP…ILAKLSVVPI (64 aa)) enclose the S5 DRBM domain.

This sequence belongs to the universal ribosomal protein uS5 family.

The chain is Small ribosomal subunit protein uS5w (RPS2D) from Arabidopsis thaliana (Mouse-ear cress).